Reading from the N-terminus, the 270-residue chain is Phosphatidylglycerol--prolipoprotein diacylglyceryl transferase (270 aa).

7 helical membrane-spanning segments follow: residues 17 to 37 (LAIR…LWFG), 59 to 79 (MLFY…VLFY), 95 to 115 (WEGG…MWVF), 129 to 149 (FIAP…FING), 175 to 195 (PSQL…LWLF), 202 to 222 (MGAV…LAEF), and 237 to 257 (LSMG…MVVW). Arginine 142 contacts a 1,2-diacyl-sn-glycero-3-phospho-(1'-sn-glycerol).

This sequence belongs to the Lgt family.

It localises to the cell inner membrane. It catalyses the reaction L-cysteinyl-[prolipoprotein] + a 1,2-diacyl-sn-glycero-3-phospho-(1'-sn-glycerol) = an S-1,2-diacyl-sn-glyceryl-L-cysteinyl-[prolipoprotein] + sn-glycerol 1-phosphate + H(+). It participates in protein modification; lipoprotein biosynthesis (diacylglyceryl transfer). Catalyzes the transfer of the diacylglyceryl group from phosphatidylglycerol to the sulfhydryl group of the N-terminal cysteine of a prolipoprotein, the first step in the formation of mature lipoproteins. This is Phosphatidylglycerol--prolipoprotein diacylglyceryl transferase from Cupriavidus metallidurans (strain ATCC 43123 / DSM 2839 / NBRC 102507 / CH34) (Ralstonia metallidurans).